Consider the following 158-residue polypeptide: Cyclic pyranopterin monophosphate synthase (158 aa).

Residues 75–77 and 113–114 each bind substrate; these read LCH and ME. Residue aspartate 128 is part of the active site.

It belongs to the MoaC family. Homohexamer; trimer of dimers.

The enzyme catalyses (8S)-3',8-cyclo-7,8-dihydroguanosine 5'-triphosphate = cyclic pyranopterin phosphate + diphosphate. Its pathway is cofactor biosynthesis; molybdopterin biosynthesis. Functionally, catalyzes the conversion of (8S)-3',8-cyclo-7,8-dihydroguanosine 5'-triphosphate to cyclic pyranopterin monophosphate (cPMP). The protein is Cyclic pyranopterin monophosphate synthase of Dinoroseobacter shibae (strain DSM 16493 / NCIMB 14021 / DFL 12).